A 265-amino-acid chain; its full sequence is uncharacterized protein (265 aa).

A coiled-coil region spans residues alanine 143 to alanine 205.

This is an uncharacterized protein from Aquifex aeolicus (strain VF5).